Consider the following 327-residue polypeptide: Ubiquinone biosynthesis O-methyltransferase, mitochondrial (327 aa).

S-adenosyl-L-methionine is bound by residues arginine 79, glycine 142, aspartate 165, and phenylalanine 210. Glutamate 211, glutamate 214, and histidine 215 together coordinate Mg(2+).

Belongs to the class I-like SAM-binding methyltransferase superfamily. UbiG/COQ3 family. As to quaternary structure, component of a multi-subunit COQ enzyme complex, composed of at least COQ3, COQ4, COQ5, COQ6, COQ7 and COQ9. Requires Mg(2+) as cofactor.

Its subcellular location is the mitochondrion inner membrane. The catalysed reaction is a 3,4-dihydroxy-5-(all-trans-polyprenyl)benzoate + S-adenosyl-L-methionine = a 4-hydroxy-3-methoxy-5-(all-trans-polyprenyl)benzoate + S-adenosyl-L-homocysteine + H(+). It carries out the reaction a 3-demethylubiquinone + S-adenosyl-L-methionine = a ubiquinone + S-adenosyl-L-homocysteine. The enzyme catalyses a 3-demethylubiquinol + S-adenosyl-L-methionine = a ubiquinol + S-adenosyl-L-homocysteine + H(+). It participates in cofactor biosynthesis; ubiquinone biosynthesis. In terms of biological role, O-methyltransferase required for two non-consecutive steps during ubiquinone biosynthesis. Catalyzes the 2 O-methylation of 3,4-dihydroxy-5-(all-trans-polyprenyl)benzoic acid into 4-hydroxy-3-methoxy-5-(all-trans-polyprenyl)benzoic acid. Also catalyzes the last step of ubiquinone biosynthesis by mediating methylation of 3-demethylubiquinone into ubiquinone. Also able to mediate the methylation of 3-demethylubiquinol into ubiquinol. In Candida albicans (Yeast), this protein is Ubiquinone biosynthesis O-methyltransferase, mitochondrial.